A 518-amino-acid chain; its full sequence is Putative N-acetylmuramoyl-L-alanine amidase YrvJ (518 aa).

The signal sequence occupies residues 1 to 27; it reads MNKKYFVLIVCIIFTSALFPTFSSVTA. 4 consecutive SH3b domains span residues 29–91, 102–164, 181–243, and 258–320; these read QGEA…ITKE, SDTV…TSGG, STTG…LTSS, and AKKA…VQTS. Disordered stretches follow at residues 94–121 and 160–186; these read ASTS…PGTS and VTSG…TGTV. Composition is skewed to low complexity over residues 95–108 and 160–169; these read STSS…VTST and VTSGGSSSAS. Positions 322 to 352 are disordered; that stretch reads SAEEAGEPPVSDSPSGNGSLNNKTIIVDPGH. Residues 333-345 are compositionally biased toward polar residues; it reads DSPSGNGSLNNKT. Positions 346 to 514 constitute a MurNAc-LAA domain; that stretch reads IIVDPGHGGK…VTDGIESGLE (169 aa).

It belongs to the N-acetylmuramoyl-L-alanine amidase 3 family.

It localises to the secreted. Its subcellular location is the cell wall. It carries out the reaction Hydrolyzes the link between N-acetylmuramoyl residues and L-amino acid residues in certain cell-wall glycopeptides.. Its function is as follows. Probably involved in cell-wall metabolism. The protein is Putative N-acetylmuramoyl-L-alanine amidase YrvJ (yrvJ) of Bacillus subtilis (strain 168).